The following is a 519-amino-acid chain: MLGVGMAAAVLLGAVALLLADAAARRAHWWYREAAEAVLVGAVALVVVDAAARRAHGWYREAALGAARRARLPPGEMGWPLVGGMWAFLRAFKSGKPDAFIASFVRRFGRTGVYRSFMFSSPTVLVTTAEGCKQVLMDDDAFVTGWPKATVALVGPRSFVAMPYDEHRRIRKLTAAPINGFDALTGYLPFIDRTVTSSLRAWADHGGSVEFLTELRRMTFKIIVQIFLGGADQATTRALERSYTELNYGMRAMAINLPGFAYRGALRARRRLVAVLQGVLDERRAARAKGVSGGGVDMMDRLIEAQDERGRHLDDDEIIDVLVMYLNAGHESSGHITMWATVFLQENPDMFARAKAEQEAIMRSIPSSQRGLTLRDFRKMEYLSQVIDETLRLVNISFVSFRQATRDVFVNGYLIPKGWKVQLWYRSVHMDPQVYPDPTKFDPSRWEGHSPRAGTFLAFGLGARLCPGNDLAKLEISVFLHHFLLGYKLARTNPRCRVRYLPHPRPVDNCLAKITRVGS.

The chain crosses the membrane as a helical span at residues 1–21 (MLGVGMAAAVLLGAVALLLAD). Cys466 contributes to the heme binding site.

Belongs to the cytochrome P450 family. The cofactor is heme. Expressed in roots, developing leaves, the vegetative meristem, and suspension culture cells.

It is found in the membrane. The protein operates within plant hormone biosynthesis; gibberellin biosynthesis. The protein is Cytochrome P450 88A1 (CYP88A1) of Zea mays (Maize).